Reading from the N-terminus, the 607-residue chain is MKWVTFVSLLFLFSSAYSRGVLRRDTHKSEIAHRFNDLGEKHFKGLVLVAFSQYLQQCPFEDHVKLVNEVTEFAKKCAADESAENCDKSLHTLFGDKLCTVATLRATYGELADCCEKQEPERNECFLTHKDDHPNLPKLKPEPDAQCAAFQEDPDKFLGKYLYEVARRHPYFYGPELLFHAEEYKADFTECCPADDKLACLIPKLDALKERILLSSAKERLKCSSFQNFGERAVKAWSVARLSQKFPKADFAEVSKIVTDLTKVHKECCHGDLLECADDRADLAKYICEHQDSISGKLKACCDKPLLQKSHCIAEVKEDDLPSDLPALAADFAEDKEICKHYKDAKDVFLGTFLYEYSRRHPDYSVSLLLRIAKTYEATLEKCCAEADPPACYRTVFDQFTPLVEEPKSLVKKNCDLFEEVGEYDFQNALIVRYTKKAPQVSTPTLVEIGRTLGKVGSRCCKLPESERLPCSENHLALALNRLCVLHEKTPVSEKITKCCTDSLAERRPCFSALELDEGYVPKEFKAETFTFHADICTLPEDEKQIKKQSALAELVKHKPKATKEQLKTVLGNFSAFVAKCCGREDKEACFAEEGPKLVASSQLALA.

Residues 1–18 form the signal peptide; sequence MKWVTFVSLLFLFSSAYS. Positions 19-24 are excised as a propeptide; that stretch reads RGVLRR. Albumin domains lie at 19–209, 210–402, and 403–600; these read RGVL…DALK, ERIL…QFTP, and LVEE…KLVA. Cu cation is bound at residue His27. Ser29 is subject to Phosphoserine. Ca(2+) is bound by residues Glu30 and Asp37. A disulfide bridge connects residues Cys77 and Cys86. Phosphoserine is present on residues Ser82 and Ser89. His91 serves as a coordination point for Zn(2+). 6 disulfide bridges follow: Cys99/Cys115, Cys114/Cys125, Cys147/Cys192, Cys191/Cys200, Cys223/Cys269, and Cys268/Cys276. Thr107 bears the Phosphothreonine mark. Glu267 contributes to the Ca(2+) binding site. Zn(2+)-binding residues include His270 and Asp272. The Ca(2+) site is built by Asp272, Glu275, Asp278, and Asp282. 8 disulfides stabilise this stretch: Cys288/Cys302, Cys301/Cys312, Cys339/Cys384, Cys383/Cys392, Cys415/Cys461, Cys460/Cys471, Cys484/Cys500, and Cys499/Cys510. Phosphoserine is present on Ser442. Thr443 and Thr445 each carry phosphothreonine. The residue at position 512 (Ser512) is a Phosphoserine. 2 disulfide bridges follow: Cys537/Cys582 and Cys581/Cys590. N6-methyllysine is present on Lys557. The residue at position 569 (Thr569) is a Phosphothreonine. Lys587 carries the post-translational modification N6-succinyllysine.

Belongs to the ALB/AFP/VDB family. In terms of assembly, interacts with FCGRT; this interaction regulates ALB homeostasis. Interacts with TASOR. In plasma, occurs in a covalently-linked complex with chromophore-bound alpha-1-microglobulin; this interaction does not prevent fatty acid binding to ALB. Phosphorylated by FAM20C in the extracellular medium. As to expression, plasma.

Its subcellular location is the secreted. Binds water, Ca(2+), Na(+), K(+), fatty acids, hormones, bilirubin and drugs. Its main function is the regulation of the colloidal osmotic pressure of blood. Major zinc transporter in plasma, typically binds about 80% of all plasma zinc. Major calcium and magnesium transporter in plasma, binds approximately 45% of circulating calcium and magnesium in plasma. Potentially has more than two calcium-binding sites and might additionally bind calcium in a non-specific manner. The shared binding site between zinc and calcium at residue Asp-272 suggests a crosstalk between zinc and calcium transport in the blood. The rank order of affinity is zinc &gt; calcium &gt; magnesium. Binds to the bacterial siderophore enterobactin and inhibits enterobactin-mediated iron uptake of E.coli from ferric transferrin, and may thereby limit the utilization of iron and growth of enteric bacteria such as E.coli. Does not prevent iron uptake by the bacterial siderophore aerobactin. This Equus caballus (Horse) protein is Albumin (ALB).